The following is a 790-amino-acid chain: MPPIIHERSIEIAGRLLTIETGRVAEQADGAVLVRYGETVVLTTVVGAKQPVEGIDFFPLTVEYEEKMYAAGKIPGGFFRREGKPSEAAILAARLTDRPIRPLFPKGYRNEVQVISTVLSADQENEPDVLSIIGASAALTLSDIPWYGPVGAVRIGELDGELVINPTSHQLLESRMDIVVAGTADAILMVEGQANEISEDRFIEAVVRAHQEIKRIVAVQLELQAVAGKPKREFVPPQENVELKQQIADYLGDRLREAVFNPDKTLRVQATAALREEVIAHFVPNEPLAIGTPQSGLPTAKEVGDLFDSLVKELVRRTILEQGERPDGRKPDEIREIWIQVGLLPRPHGSALFTRGQTQVLTVCTLGTKEEEQFLDSLGIEETKRYMHHYNFPPFSTGEIRRLRGPSRRDIGHGALAERALLAVLPSEDEFPYTMRLVSEVLSSNGSTSMASVCGSSLALMDAGVPIRKPVAGVAMGLVTDQTTGRYTILTDIQGIEDALGDMDFKVAGTRDGITAIQMDIKVMGITPEIMRDALEQARRGRLFILDKMSEVIDAPRPEMSPYAPRILRIKIKPEQIGEVIGPGGRVIRAIQEQTGTKISIEEDGTVFISAANEDAARRAVREIERLTRVPEVGEIFYGRVVTIIPSGAFVEILPGKDGFLHISEIAPERVRSVEDVLKVGQEINVMVIGVRPDGKINLSRKALLEKEAAERAATAQAPADGRSHQPRAPQRPSGTAQPERRPGPPTPRRPEQRGPSRPPRPQAQRSTPPPGQYRIGDRLKELLGEDEPN.

Residues Asp498 and Asp504 each contribute to the Mg(2+) site. Positions 565-624 constitute a KH domain; the sequence is PRILRIKIKPEQIGEVIGPGGRVIRAIQEQTGTKISIEEDGTVFISAANEDAARRAVREI. An S1 motif domain is found at 634–702; it reads GEIFYGRVVT…PDGKINLSRK (69 aa). Positions 710-790 are disordered; sequence AERAATAQAP…KELLGEDEPN (81 aa). The segment covering 739 to 755 has biased composition (basic and acidic residues); it reads PERRPGPPTPRRPEQRG. Over residues 757 to 772 the composition is skewed to pro residues; the sequence is SRPPRPQAQRSTPPPG.

It belongs to the polyribonucleotide nucleotidyltransferase family. It depends on Mg(2+) as a cofactor.

The protein resides in the cytoplasm. It catalyses the reaction RNA(n+1) + phosphate = RNA(n) + a ribonucleoside 5'-diphosphate. Involved in mRNA degradation. Catalyzes the phosphorolysis of single-stranded polyribonucleotides processively in the 3'- to 5'-direction. The protein is Polyribonucleotide nucleotidyltransferase of Thermomicrobium roseum (strain ATCC 27502 / DSM 5159 / P-2).